The chain runs to 305 residues: Methionyl-tRNA formyltransferase (305 aa).

Residue 111–114 (SLLP) participates in (6S)-5,6,7,8-tetrahydrofolate binding.

Belongs to the Fmt family.

The catalysed reaction is L-methionyl-tRNA(fMet) + (6R)-10-formyltetrahydrofolate = N-formyl-L-methionyl-tRNA(fMet) + (6S)-5,6,7,8-tetrahydrofolate + H(+). In terms of biological role, attaches a formyl group to the free amino group of methionyl-tRNA(fMet). The formyl group appears to play a dual role in the initiator identity of N-formylmethionyl-tRNA by promoting its recognition by IF2 and preventing the misappropriation of this tRNA by the elongation apparatus. The protein is Methionyl-tRNA formyltransferase of Helicobacter pylori (strain P12).